Consider the following 108-residue polypeptide: Signal recognition particle 19 kDa protein (108 aa).

Belongs to the SRP19 family. In terms of assembly, part of the signal recognition particle protein translocation system, which is composed of SRP and FtsY. Archaeal SRP consists of a 7S RNA molecule of 300 nucleotides and two protein subunits: SRP54 and SRP19.

It localises to the cytoplasm. Its function is as follows. Involved in targeting and insertion of nascent membrane proteins into the cytoplasmic membrane. Binds directly to 7S RNA and mediates binding of the 54 kDa subunit of the SRP. The chain is Signal recognition particle 19 kDa protein from Thermococcus kodakarensis (strain ATCC BAA-918 / JCM 12380 / KOD1) (Pyrococcus kodakaraensis (strain KOD1)).